A 256-amino-acid polypeptide reads, in one-letter code: Small ribosomal subunit protein uS2 (256 aa).

Belongs to the universal ribosomal protein uS2 family.

The chain is Small ribosomal subunit protein uS2 from Brucella anthropi (strain ATCC 49188 / DSM 6882 / CCUG 24695 / JCM 21032 / LMG 3331 / NBRC 15819 / NCTC 12168 / Alc 37) (Ochrobactrum anthropi).